The following is a 62-amino-acid chain: UPF0370 protein plu2724 (62 aa).

A helical transmembrane segment spans residues 3-23 (WLADYWWIILILLVGVLLNAI). Residues 36-62 (DNKPELPPHRDLNSKWDDEDDWPQKKP) are disordered.

It belongs to the UPF0370 family.

The protein localises to the cell membrane. The polypeptide is UPF0370 protein plu2724 (Photorhabdus laumondii subsp. laumondii (strain DSM 15139 / CIP 105565 / TT01) (Photorhabdus luminescens subsp. laumondii)).